Consider the following 116-residue polypeptide: Spexin (116 aa).

Residues methionine 1–serine 26 form the signal peptide. The propeptide occupies alanine 27–arginine 35. Residue glutamine 49 is modified to Glutamine amide. 2 consecutive propeptides follow at residues glycine 50–tryptophan 116 and proline 74–tryptophan 116. The segment covering phenylalanine 53–serine 73 has biased composition (basic and acidic residues). The segment at phenylalanine 53 to threonine 80 is disordered.

The protein belongs to the spexin family.

The protein localises to the secreted. It localises to the extracellular space. The protein resides in the cytoplasmic vesicle. It is found in the secretory vesicle. Its function is as follows. Plays a role as a central modulator of cardiovascular and renal function and nociception. Also plays a role in energy metabolism and storage. Inhibits adrenocortical cell proliferation with minor stimulation on corticosteroid release. Functionally, acts as a ligand for galanin receptors GALR2 and GALR3. Intracerebroventricular administration of the peptide induces an increase in arterial blood pressure, a decrease in both heart rate and renal excretion and delayed natriuresis. Intraventricular administration of the peptide induces antinociceptive activity. Also induces contraction of muscarinic-like stomach smooth muscles. Intraperitoneal administration of the peptide induces a reduction in food consumption and body weight. Inhibits long chain fatty acid uptake into adipocytes. Intracerebroventricular administration of the peptide induces a decrease in heart rate, but no change in arterial pressure, and an increase in urine flow rate. Intraventricular administration of the peptide induces antinociceptive activity. The sequence is that of Spexin (SPX) from Bos taurus (Bovine).